A 457-amino-acid chain; its full sequence is Siroheme synthase (457 aa).

Residues 4–202 (LPIFCQLRDR…ANADEKAVNA (199 aa)) form a precorrin-2 dehydrogenase /sirohydrochlorin ferrochelatase region. NAD(+) is bound by residues 22-23 (DV) and 43-44 (LT). At Ser128 the chain carries Phosphoserine. The interval 216 to 448 (GEVVLVGAGP…IIVGRVVALR (233 aa)) is uroporphyrinogen-III C-methyltransferase. An S-adenosyl-L-methionine-binding site is contributed by Pro225. Asp248 acts as the Proton acceptor in catalysis. The active-site Proton donor is the Lys270. Residues 301-303 (GGD), Ile306, 331-332 (TA), Met382, Gly411, and Ala437 each bind S-adenosyl-L-methionine.

The protein in the N-terminal section; belongs to the precorrin-2 dehydrogenase / sirohydrochlorin ferrochelatase family. It in the C-terminal section; belongs to the precorrin methyltransferase family. As to quaternary structure, homodimer.

The enzyme catalyses uroporphyrinogen III + 2 S-adenosyl-L-methionine = precorrin-2 + 2 S-adenosyl-L-homocysteine + H(+). It catalyses the reaction precorrin-2 + NAD(+) = sirohydrochlorin + NADH + 2 H(+). It carries out the reaction siroheme + 2 H(+) = sirohydrochlorin + Fe(2+). Its pathway is cofactor biosynthesis; adenosylcobalamin biosynthesis; precorrin-2 from uroporphyrinogen III: step 1/1. It participates in cofactor biosynthesis; adenosylcobalamin biosynthesis; sirohydrochlorin from precorrin-2: step 1/1. It functions in the pathway porphyrin-containing compound metabolism; siroheme biosynthesis; precorrin-2 from uroporphyrinogen III: step 1/1. The protein operates within porphyrin-containing compound metabolism; siroheme biosynthesis; siroheme from sirohydrochlorin: step 1/1. Its pathway is porphyrin-containing compound metabolism; siroheme biosynthesis; sirohydrochlorin from precorrin-2: step 1/1. Functionally, multifunctional enzyme that catalyzes the SAM-dependent methylations of uroporphyrinogen III at position C-2 and C-7 to form precorrin-2 via precorrin-1. Then it catalyzes the NAD-dependent ring dehydrogenation of precorrin-2 to yield sirohydrochlorin. Finally, it catalyzes the ferrochelation of sirohydrochlorin to yield siroheme. This Salmonella typhimurium (strain LT2 / SGSC1412 / ATCC 700720) protein is Siroheme synthase.